We begin with the raw amino-acid sequence, 274 residues long: Dermonecrotic toxin SdSicTox-betaIIB1bi (274 aa).

Residue His-5 is part of the active site. Positions 25 and 27 each coordinate Mg(2+). Catalysis depends on His-41, which acts as the Nucleophile. Disulfide bonds link Cys-45-Cys-51 and Cys-47-Cys-190. Position 85 (Asp-85) interacts with Mg(2+).

Belongs to the arthropod phospholipase D family. Class II subfamily. Requires Mg(2+) as cofactor. In terms of tissue distribution, expressed by the venom gland.

It is found in the secreted. It catalyses the reaction an N-(acyl)-sphingosylphosphocholine = an N-(acyl)-sphingosyl-1,3-cyclic phosphate + choline. The catalysed reaction is an N-(acyl)-sphingosylphosphoethanolamine = an N-(acyl)-sphingosyl-1,3-cyclic phosphate + ethanolamine. It carries out the reaction a 1-acyl-sn-glycero-3-phosphocholine = a 1-acyl-sn-glycero-2,3-cyclic phosphate + choline. The enzyme catalyses a 1-acyl-sn-glycero-3-phosphoethanolamine = a 1-acyl-sn-glycero-2,3-cyclic phosphate + ethanolamine. Dermonecrotic toxins cleave the phosphodiester linkage between the phosphate and headgroup of certain phospholipids (sphingolipid and lysolipid substrates), forming an alcohol (often choline) and a cyclic phosphate. This toxin acts on sphingomyelin (SM). It may also act on ceramide phosphoethanolamine (CPE), lysophosphatidylcholine (LPC) and lysophosphatidylethanolamine (LPE), but not on lysophosphatidylserine (LPS), and lysophosphatidylglycerol (LPG). It acts by transphosphatidylation, releasing exclusively cyclic phosphate products as second products. Induces dermonecrosis, hemolysis, increased vascular permeability, edema, inflammatory response, and platelet aggregation. This Sicarius cf. damarensis (strain GJB-2008) (Six-eyed sand spider) protein is Dermonecrotic toxin SdSicTox-betaIIB1bi.